We begin with the raw amino-acid sequence, 64 residues long: DNA-directed RNA polymerase subunit Rpo10 (64 aa).

4 residues coordinate Zn(2+): Cys7, Cys10, Cys45, and Cys46.

It belongs to the archaeal Rpo10/eukaryotic RPB10 RNA polymerase subunit family. As to quaternary structure, part of the RNA polymerase complex. Zn(2+) is required as a cofactor.

It localises to the cytoplasm. It catalyses the reaction RNA(n) + a ribonucleoside 5'-triphosphate = RNA(n+1) + diphosphate. Its function is as follows. DNA-dependent RNA polymerase (RNAP) catalyzes the transcription of DNA into RNA using the four ribonucleoside triphosphates as substrates. This is DNA-directed RNA polymerase subunit Rpo10 from Natronomonas pharaonis (strain ATCC 35678 / DSM 2160 / CIP 103997 / JCM 8858 / NBRC 14720 / NCIMB 2260 / Gabara) (Halobacterium pharaonis).